A 565-amino-acid chain; its full sequence is Tyrosine-protein phosphatase non-receptor type 5 (565 aa).

Basic and acidic residues predominate over residues 1-16 (MNYEGARSERENHAAD). The disordered stretch occupies residues 1–80 (MNYEGARSER…KPPPRGAGSH (80 aa)). Positions 56–75 (MPPPPPPSPPSDPAQKPPPR) are enriched in pro residues. 2 consecutive transmembrane segments (helical) span residues 88-108 (LCLFAASQFLLACGVLWFSGY) and 146-166 (LLLVFLSVGLVLVTTLVWHLL). The segment at 169 to 189 (PPEPPTPLPPEDRRQSVSRQP) is disordered. Phosphoserine; by PKA is present on Ser-245. Thr-255 is subject to Phosphothreonine; by MAPK. Residue Ser-268 is modified to Phosphoserine; by MAPK. The region spanning 300–555 (LQAEFFEIPM…QFVHHVMSLY (256 aa)) is the Tyrosine-protein phosphatase domain. Residues Asp-461, 496–502 (CSAGIGR), and Gln-540 contribute to the substrate site. Residue Cys-496 is the Phosphocysteine intermediate of the active site.

Belongs to the protein-tyrosine phosphatase family. Non-receptor class subfamily. Post-translationally, phosphorylation at Ser-245 by PKA deactivates PTPN5. Phosphorylation at Thr-255 and Ser-268 by MAPKs stabilizes the phosphatase, dephosphorylation of these sites results in ubiquitin-mediated degradation of the active phosphatase.

It is found in the endoplasmic reticulum membrane. The catalysed reaction is O-phospho-L-tyrosyl-[protein] + H2O = L-tyrosyl-[protein] + phosphate. In terms of biological role, may regulate the activity of several effector molecules involved in synaptic plasticity and neuronal cell survival, including MAPKs, Src family kinases and NMDA receptors. In Homo sapiens (Human), this protein is Tyrosine-protein phosphatase non-receptor type 5 (PTPN5).